We begin with the raw amino-acid sequence, 849 residues long: ATP-binding cassette sub-family B member 6 (849 aa).

Residues Met-1 to Pro-25 are Lumenal-facing. The interval Met-1 to Arg-195 is required for the lysosomal targeting. The segment at Met-1–Gln-227 is required for ATPase activity. Cys-8 and Cys-26 are joined by a disulfide. Asn-11 carries N-linked (GlcNAc...) asparagine glycosylation. Residues Cys-26–Leu-46 traverse the membrane as a helical segment. The Cytoplasmic segment spans residues Gln-47–Gln-72. The chain crosses the membrane as a helical span at residues Ile-73–Gly-93. Topologically, residues Thr-94–Tyr-98 are lumenal. A helical transmembrane segment spans residues Gly-99–Leu-119. Over His-120–Gly-136 the chain is Cytoplasmic. A helical transmembrane segment spans residues Val-137–Trp-157. Residues Gln-158–Lys-173 lie on the Lumenal side of the membrane. Residues Val-174–Ile-194 traverse the membrane as a helical segment. At Arg-195 to Leu-254 the chain is on the cytoplasmic side. The chain crosses the membrane as a helical span at residues Leu-255–Ile-275. Positions Val-256 to Ser-547 constitute an ABC transmembrane type-1 domain. Topologically, residues Tyr-276–Asn-291 are lumenal. A helical transmembrane segment spans residues Ile-292–Gly-312. The Cytoplasmic portion of the chain corresponds to Thr-313–Ser-373. The chain crosses the membrane as a helical span at residues Leu-374–Val-394. Over Tyr-395–Asn-401 the chain is Lumenal. The helical transmembrane segment at Ala-402–Ile-422 threads the bilayer. The Cytoplasmic segment spans residues Thr-423–Gln-492. The helical transmembrane segment at Asn-493–Glu-513 threads the bilayer. The Lumenal segment spans residues Asn-514–Asp-520. Residues Tyr-521–Tyr-541 form a helical membrane-spanning segment. Over Tyr-542–His-849 the chain is Cytoplasmic. An ABC transporter domain is found at Ile-581 to Lys-815. Residues Tyr-590 and Gly-614 to Arg-625 contribute to the ATP site. Positions Gln-814–Asp-825 are enriched in low complexity. A disordered region spans residues Gln-814 to His-849. The span at Asp-827 to Glu-836 shows a compositional bias: basic and acidic residues.

Belongs to the ABC transporter superfamily. ABCB family. Heavy Metal importer (TC 3.A.1.210) subfamily. In terms of assembly, homodimer. N-glycosylated.

The protein localises to the cell membrane. It is found in the mitochondrion outer membrane. Its subcellular location is the endoplasmic reticulum membrane. The protein resides in the golgi apparatus membrane. It localises to the endosome membrane. The protein localises to the lysosome membrane. It is found in the late endosome membrane. Its subcellular location is the early endosome membrane. The protein resides in the secreted. It localises to the extracellular exosome. The protein localises to the mitochondrion. It is found in the endosome. Its subcellular location is the multivesicular body membrane. The protein resides in the melanosome membrane. The enzyme catalyses heme b(in) + ATP + H2O = heme b(out) + ADP + phosphate + H(+). It catalyses the reaction coproporphyrin III(in) + ATP + H2O = coproporphyrin III(out) + ADP + phosphate + H(+). The catalysed reaction is pheophorbide a(in) + ATP + H2O = pheophorbide a(out) + ADP + phosphate + H(+). It carries out the reaction coproporphyrinogen III(in) + ATP + H2O = coproporphyrinogen III(out) + ADP + phosphate + H(+). The enzyme catalyses protoporphyrin IX(in) + ATP + H2O = protoporphyrin IX(out) + ADP + phosphate + H(+). It catalyses the reaction coproporphyrin I(in) + ATP + H2O = coproporphyrin I(out) + ADP + phosphate + H(+). The catalysed reaction is uroporphyrin I(in) + ATP + H2O = uroporphyrin I(out) + ADP + phosphate + H(+). It carries out the reaction uroporphyrin III(in) + ATP + H2O = uroporphyrin III(out) + ADP + phosphate + H(+). In terms of biological role, ATP-dependent transporter that catalyzes the transport of a broad-spectrum of porphyrins from the cytoplasm to the extracellular space through the plasma membrane or into the vesicle lumen. May also function as an ATP-dependent importer of porphyrins from the cytoplasm into the mitochondria, in turn may participate in the de novo heme biosynthesis regulation and in the coordination of heme and iron homeostasis during phenylhydrazine stress. May also play a key role in the early steps of melanogenesis producing PMEL amyloid fibrils. In vitro, it confers to cells a resistance to toxic metal such as arsenic and cadmium and against chemotherapeutics agent such as 5-fluorouracil, SN-38 and vincristin. In addition may play a role in the transition metal homeostasis. This Xenopus tropicalis (Western clawed frog) protein is ATP-binding cassette sub-family B member 6 (abcb6).